A 338-amino-acid polypeptide reads, in one-letter code: Aspartate carbamoyltransferase catalytic subunit (338 aa).

Residues R59 and T60 each coordinate carbamoyl phosphate. K87 contacts L-aspartate. R109, H142, and Q145 together coordinate carbamoyl phosphate. L-aspartate-binding residues include R182 and R253. Carbamoyl phosphate-binding residues include G294 and P295.

The protein belongs to the aspartate/ornithine carbamoyltransferase superfamily. ATCase family. As to quaternary structure, heterododecamer (2C3:3R2) of six catalytic PyrB chains organized as two trimers (C3), and six regulatory PyrI chains organized as three dimers (R2).

It carries out the reaction carbamoyl phosphate + L-aspartate = N-carbamoyl-L-aspartate + phosphate + H(+). The protein operates within pyrimidine metabolism; UMP biosynthesis via de novo pathway; (S)-dihydroorotate from bicarbonate: step 2/3. In terms of biological role, catalyzes the condensation of carbamoyl phosphate and aspartate to form carbamoyl aspartate and inorganic phosphate, the committed step in the de novo pyrimidine nucleotide biosynthesis pathway. This Prochlorococcus marinus (strain SARG / CCMP1375 / SS120) protein is Aspartate carbamoyltransferase catalytic subunit.